The following is a 378-amino-acid chain: CST complex subunit STN1 (378 aa).

The interaction with CTC1 stretch occupies residues 8-195 (MECESSPREE…KVYDQPFRNP (188 aa)). A DNA-binding region (OB) is located at residues 64–165 (VDIMGAVISV…EICANIYYKV (102 aa)). Winged helix-turn-helix (wHTH) regions lie at residues 201-305 (EALN…YVTT) and 306-378 (KDKD…YAAF).

Belongs to the STN1 family. In terms of assembly, component of the CST complex, composed of TEN1/C17orf106, CTC1/C17orf68 and STN1; in the complex interacts directly with TEN1 and CTC1. Interacts with ACD/TPP1. Interacts with POT1 and POLA1.

It localises to the nucleus. The protein resides in the chromosome. Its subcellular location is the telomere. Its function is as follows. Component of the CST complex proposed to act as a specialized replication factor promoting DNA replication under conditions of replication stress or natural replication barriers such as the telomere duplex. The CST complex binds single-stranded DNA with high affinity in a sequence-independent manner, while isolated subunits bind DNA with low affinity by themselves. Initially the CST complex has been proposed to protect telomeres from DNA degradation. However, the CST complex has been shown to be involved in several aspects of telomere replication. The CST complex inhibits telomerase and is involved in telomere length homeostasis; it is proposed to bind to newly telomerase-synthesized 3' overhangs and to terminate telomerase action implicating the association with the ACD:POT1 complex thus interfering with its telomerase stimulation activity. The CST complex is also proposed to be involved in fill-in synthesis of the telomeric C-strand probably implicating recruitment and activation of DNA polymerase alpha. The CST complex facilitates recovery from many forms of exogenous DNA damage; seems to be involved in the re-initiation of DNA replication at repaired forks and/or dormant origins. Required for efficicient replication of the duplex region of the telomere. Promotes efficient replication of lagging-strand telomeres. Promotes general replication start following replication-fork stalling implicating new origin firing. May be in involved in C-strand fill-in during late S/G2 phase independent of its role in telomere duplex replication. This Mus musculus (Mouse) protein is CST complex subunit STN1.